The following is a 183-amino-acid chain: MSTISVLITALALSMDAMSLSIYQGIASTESQKKQNFLKIVLTFGIFQFAMALVGSLSGILFIHYISLYSKYVSFAIFLFLGLMMLKEALKKEEMEYDEKYLDFKTLIIMGIATSLDALLVGLTFSILPFYQTFLYTVEIGVITAIIAGLGFILGDKFGNILGQKSHFLGAALLIFISINILL.

6 consecutive transmembrane segments (helical) span residues 3–23 (TISVLITALALSMDAMSLSIY), 43–63 (TFGIFQFAMALVGSLSGILFI), 66–86 (ISLYSKYVSFAIFLFLGLMML), 107–127 (LIIMGIATSLDALLVGLTFSI), 134–154 (FLYTVEIGVITAIIAGLGFIL), and 161–181 (ILGQKSHFLGAALLIFISINI).

It belongs to the MntP (TC 9.B.29) family.

The protein localises to the cell inner membrane. In terms of biological role, probably functions as a manganese efflux pump. In Fusobacterium nucleatum subsp. nucleatum (strain ATCC 25586 / DSM 15643 / BCRC 10681 / CIP 101130 / JCM 8532 / KCTC 2640 / LMG 13131 / VPI 4355), this protein is Putative manganese efflux pump MntP.